The primary structure comprises 141 residues: Albumin-8 (141 aa).

Residues 1 to 25 (MARFSIVFAAAGVLLLVAMAPVSEA) form the signal peptide. Residues 26–38 (STTTIITTIIEEN) constitute a propeptide that is removed on maturation. 4 disulfides stabilise this stretch: C49–C100, C62–C89, C90–C132, and C102–C139.

It belongs to the 2S seed storage albumins family. Heterodimer; disulfide-linked.

In terms of biological role, this is a 2S seed storage protein. This Helianthus annuus (Common sunflower) protein is Albumin-8.